A 208-amino-acid polypeptide reads, in one-letter code: Small ribosomal subunit protein uS4 (208 aa).

Positions 98–160 constitute an S4 RNA-binding domain; sequence QRLDNVVYRM…SKNNSQIVRA (63 aa).

The protein belongs to the universal ribosomal protein uS4 family. In terms of assembly, part of the 30S ribosomal subunit. Contacts protein S5. The interaction surface between S4 and S5 is involved in control of translational fidelity.

Its function is as follows. One of the primary rRNA binding proteins, it binds directly to 16S rRNA where it nucleates assembly of the body of the 30S subunit. With S5 and S12 plays an important role in translational accuracy. This is Small ribosomal subunit protein uS4 from Sulfurimonas denitrificans (strain ATCC 33889 / DSM 1251) (Thiomicrospira denitrificans (strain ATCC 33889 / DSM 1251)).